Consider the following 445-residue polypeptide: Response regulator protein PilR (445 aa).

Residues 5-119 (KALIVDDEPD…RLRELVATAL (115 aa)) form the Response regulatory domain. 4-aspartylphosphate is present on residues D11 and D54. A Sigma-54 factor interaction domain is found at 135 to 364 (LLGESPPMRA…LENMLERAYT (230 aa)). ATP contacts are provided by residues 163-170 (GESGSGKE) and 226-235 (ASGGTLFLDE). The H-T-H motif DNA-binding region spans 418 to 437 (RWNRTAAAQRLGLTFRSMRY).

Phosphorylated by PilS.

It localises to the cytoplasm. Member of the two-component regulatory system PilS/PilR that regulates the expression of multiple genes including the type IV pilus (T4P) major subunit PilA. Thereby, plays a major role in the regulation of multiple motility pathways. Upon appropriate environmental signals, the histidine kinase PilS transfers the phosphoryl group onto PilR. In turn, PilR functions as a transcriptional activator by direct binding to a cis-acting sequence upstream of the pilin gene promoter leading to its activation. The protein is Response regulator protein PilR (pilR) of Pseudomonas aeruginosa (strain ATCC 15692 / DSM 22644 / CIP 104116 / JCM 14847 / LMG 12228 / 1C / PRS 101 / PAO1).